Here is a 1321-residue protein sequence, read N- to C-terminus: Bile salt export pump (1321 aa).

Residues 1–62 (MSDSVILRSI…FSSSTDIWLM (62 aa)) are Cytoplasmic-facing. Residues 16–37 (ENDGFESDKSYNNDKKSRLQDE) form a disordered region. Positions 21-37 (ESDKSYNNDKKSRLQDE) are enriched in basic and acidic residues. In terms of domain architecture, ABC transmembrane type-1 1 spans 62 to 385 (MFVGSLCAFL…ASPCLEAFAT (324 aa)). The chain crosses the membrane as a helical span at residues 63-83 (FVGSLCAFLHGIAQPGVLLIF). Topologically, residues 84–147 (GTMTDVFIDY…MIKFASYYAG (64 aa)) are extracellular. N-linked (GlcNAc...) asparagine glycans are attached at residues Asn-109, Asn-116, Asn-122, and Asn-125. Residues 148–168 (IAVAVLITGYIQICFWVIAAA) form a helical membrane-spanning segment. The Cytoplasmic portion of the chain corresponds to 169-215 (RQIQKMRKFYFRRIMRMEIGWFDCNSVGELNTRFSDDINKINDAIAD). The chain crosses the membrane as a helical span at residues 216–236 (QMALFIQRMTSTICGFLLGFF). The Extracellular segment spans residues 237–240 (RGWK). A helical membrane pass occupies residues 241-261 (LTLVIISVSPLIGIGAATIGL). Topologically, residues 262–319 (SVSKFTDYELKAYAKAGVVADEVISSMRTVAAFGGEKREVERYEKNLVFAQRWGIRKG) are cytoplasmic. A helical membrane pass occupies residues 320–340 (IVMGFFTGFVWCLIFLCYALA). Over 341–353 (FWYGSTLVLDEGE) the chain is Extracellular. A helical membrane pass occupies residues 354–374 (YTPGTLVQIFLSVIVGALNLG). Over 375–755 (NASPCLEAFA…KFSAPEWPYM (381 aa)) the chain is Cytoplasmic. The 237-residue stretch at 420–656 (IEFHNVTFHY…KGVYFTLVTL (237 aa)) folds into the ABC transporter 1 domain. 455–462 (GPSGAGKS) contributes to the ATP binding site. At Thr-586 the chain carries Phosphothreonine. Phosphoserine is present on Ser-587. Residues 651-672 (FTLVTLQSQGNQALNEEDIKDA) are interaction with HAX1. Residues Ser-690, Ser-701, and Ser-704 each carry the phosphoserine modification. Residues 755–1043 (MLVGSVGAAV…AFSYTPSYAK (289 aa)) form the ABC transmembrane type-1 2 domain. The chain crosses the membrane as a helical span at residues 756 to 776 (LVGSVGAAVNGTVTPLYAFLF). Residues 777-794 (SQILGTFSIPDKEEQRSQ) are Extracellular-facing. Residues 795–815 (INGVCLLFVAMGCVSLFTQFL) form a helical membrane-spanning segment. Residues 816 to 869 (QGYAFAKSGELLTKRLRKFGFRAMLGQDIAWFDDLRNSPGALTTRLATDASQVQ) are Cytoplasmic-facing. The next 2 helical transmembrane spans lie at 870 to 890 (GAAGSQIGMIVNSFTNVTVAM) and 891 to 911 (IIAFSFSWKLSLVILCFFPFL). The Cytoplasmic portion of the chain corresponds to 912–979 (ALSGATQTRM…PFKTAIQKAN (68 aa)). The helical transmembrane segment at 980–1000 (IYGFCFAFAQCIMFIANSASY) threads the bilayer. Residues 1001–1011 (RYGGYLISNEG) lie on the Extracellular side of the membrane. Residues 1012 to 1032 (LHFSYVFRVISAVVLSATALG) form a helical membrane-spanning segment. Residues 1033-1321 (RAFSYTPSYA…KLVTTGSPIS (289 aa)) are Cytoplasmic-facing. In terms of domain architecture, ABC transporter 2 spans 1078–1316 (IDFVDCKFTY…KGAYYKLVTT (239 aa)). Position 1113 to 1120 (1113 to 1120 (GSSGCGKS)) interacts with ATP. The residue at position 1214 (Ser-1214) is a Phosphoserine. The mediates internalization from the plasma membrane stretch occupies residues 1311–1314 (YKLV). At Ser-1321 the chain carries Phosphoserine.

Belongs to the ABC transporter superfamily. ABCB family. Multidrug resistance exporter (TC 3.A.1.201) subfamily. Interacts with HAX1. Interacts with the adapter protein complex 2 (AP-2) throught AP2A2 or AP2A1; this interaction regulates cell membrane expression of ABCB11 through its internalization in a clathrin-dependent manner and its subsequent degradation. N-glycosylated. Post-translationally, ubiquitinated; short-chain ubiquitination regulates cell-Surface expression of ABCB11. Expressed predominantly, if not exclusively in the liver, where it was further localized to the canalicular microvilli and to subcanalicular vesicles of the hepatocytes by in situ.

It localises to the apical cell membrane. The protein localises to the recycling endosome membrane. Its subcellular location is the endosome. It is found in the cell membrane. It carries out the reaction cholate(in) + ATP + H2O = cholate(out) + ADP + phosphate + H(+). The catalysed reaction is taurocholate(in) + ATP + H2O = taurocholate(out) + ADP + phosphate + H(+). The enzyme catalyses glycocholate(in) + ATP + H2O = glycocholate(out) + ADP + phosphate + H(+). It catalyses the reaction glycochenodeoxycholate(in) + ATP + H2O = glycochenodeoxycholate(out) + ADP + phosphate + H(+). It carries out the reaction taurochenodeoxycholate(in) + ATP + H2O = taurochenodeoxycholate(out) + ADP + phosphate + H(+). The catalysed reaction is glycoursodeoxycholate(in) + ATP + H2O = glycoursodeoxycholate(out) + ADP + phosphate + H(+). The enzyme catalyses tauroursodeoxycholate(in) + ATP + H2O = tauroursodeoxycholate(out) + ADP + phosphate + H(+). It catalyses the reaction taurodeoxycholate(in) + ATP + H2O = taurodeoxycholate(out) + ADP + phosphate + H(+). It carries out the reaction taurolithocholate 3-sulfate(in) + ATP + H2O = taurolithocholate 3-sulfate(out) + ADP + phosphate + H(+). The catalysed reaction is pravastatin(in) + ATP + H2O = pravastatin(out) + ADP + phosphate + H(+). Its activity is regulated as follows. The uptake of taurocholate is inhibited by taurolithocholate sulfate with an IC(50) of 9 uM. Pravastatin competitively inhibits the transport of taurocholic acid. Cyclosporin A, glibenclamide, rifampicin and troglitazonestrongly competitively inhibit the transport activity of taurocholate. The canalicular transport activity of taurocholate is strongly dependent on canalicular membrane cholesterol content. The uptake of taurocholate is increased by short- and medium-chain fatty acids. Cholesterol increases transport capacity of taurocholate without affecting the affinity for the substrate. Catalyzes the transport of the major hydrophobic bile salts, such as taurine and glycine-conjugated cholic acid across the canalicular membrane of hepatocytes in an ATP-dependent manner, therefore participates in hepatic bile acid homeostasis and consequently to lipid homeostasis through regulation of biliary lipid secretion in a bile salts dependent manner. Transports taurine-conjugated bile salts more rapidly than glycine-conjugated bile salts. Also transports non-bile acid compounds, such as pravastatin and fexofenadine in an ATP-dependent manner and may be involved in their biliary excretion. This Homo sapiens (Human) protein is Bile salt export pump.